The following is a 192-amino-acid chain: Peptide deformylase (192 aa).

Positions 108 and 150 each coordinate Fe cation. The active site involves E151. Residue H154 coordinates Fe cation.

Belongs to the polypeptide deformylase family. It depends on Fe(2+) as a cofactor.

The enzyme catalyses N-terminal N-formyl-L-methionyl-[peptide] + H2O = N-terminal L-methionyl-[peptide] + formate. In terms of biological role, removes the formyl group from the N-terminal Met of newly synthesized proteins. Requires at least a dipeptide for an efficient rate of reaction. N-terminal L-methionine is a prerequisite for activity but the enzyme has broad specificity at other positions. This is Peptide deformylase from Opitutus terrae (strain DSM 11246 / JCM 15787 / PB90-1).